The primary structure comprises 331 residues: MSTKEKLISHVMKEEPVGSRNKVTVVGVGMVGMASAISILLKDLCDELAMVDVMEDKLKGEVMDLQHGSLFLKTKIVGDKDYSVTANSKVVVVTAGARQQEGESRLNLVQRNVNIFKFIIPNIVKYSPNCILMVVSNPVDILTYVAWKLSGFPRHRVIGSGTNLDSARFRHLIGEKLHLHPSSCHAWIVGEHGDSSVPVWSGVNVAGVSLQDLNPQMGTEGDGENWKAIHKEVVDGAYEVIKLKGYTSWAIGMSVADLVESIIKNMHKVHPVSTLVQGMHGVKDEVFLSVPCVLGNSGLTDVIHMTLKADEEKQVQKSAETLWGVQKELTL.

Residues 29-57 (GMVG…MEDK) and Arg-98 each bind NAD(+). Residues Arg-105, Asn-137, and Arg-168 each contribute to the substrate site. Asn-137 is a binding site for NAD(+). Residue His-192 is the Proton acceptor of the active site. Thr-247 serves as a coordination point for substrate.

Belongs to the LDH/MDH superfamily. LDH family. In terms of assembly, homotetramer.

It is found in the cytoplasm. The enzyme catalyses (S)-lactate + NAD(+) = pyruvate + NADH + H(+). The protein operates within fermentation; pyruvate fermentation to lactate; (S)-lactate from pyruvate: step 1/1. Its function is as follows. Interconverts simultaneously and stereospecifically pyruvate and lactate with concomitant interconversion of NADH and NAD(+). The protein is L-lactate dehydrogenase A chain (ldha) of Parachaenichthys charcoti (Charcot's dragonfish).